A 66-amino-acid chain; its full sequence is UPF0337 protein BT9727_0908 (66 aa).

The tract at residues Met-1 to Lys-22 is disordered. The span at Lys-13–Lys-22 shows a compositional bias: basic and acidic residues.

Belongs to the UPF0337 (CsbD) family.

The protein is UPF0337 protein BT9727_0908 of Bacillus thuringiensis subsp. konkukian (strain 97-27).